The primary structure comprises 230 residues: Protein CbbY (230 aa).

Aspartate 8 (nucleophile) is an active-site residue. Mg(2+) is bound by residues aspartate 8 and aspartate 10. Aspartate 8 contributes to the substrate binding site. Catalysis depends on aspartate 10, which acts as the Proton donor. Substrate is bound by residues glutamate 17, 50–54, 75–78, and 115–121; these read GGKER, HRAK, and TTTSLPN. Aspartate 176 is a binding site for Mg(2+).

This sequence belongs to the HAD-like hydrolase superfamily. CbbY/CbbZ/Gph/YieH family. Mg(2+) is required as a cofactor.

The enzyme catalyses D-xylulose 1,5-bisphosphate + H2O = D-xylulose 5-phosphate + phosphate. Highly selective xylulose-1,5-bisphosphate (XuBP) phosphatase. Also shows activity towards ribulose-1,5-bisphosphate (RuBP) and fructose-1,6-bisphosphate (FBP), but not towards fructose-6-phosphate (F6P) or ribulose-5-phosphate (Ru5P). Degrades xylulose-1,5-bisphosphate, a potent inhibitor of rubisco produced by the rubisco itself. The polypeptide is Protein CbbY (Cereibacter sphaeroides (Rhodobacter sphaeroides)).